The following is a 514-amino-acid chain: 2,3-bisphosphoglycerate-independent phosphoglycerate mutase (514 aa).

Mn(2+) contacts are provided by Asp-14 and Ser-64. Ser-64 acts as the Phosphoserine intermediate in catalysis. Residues His-125, 155-156 (RD), Arg-187, Arg-193, 263-266 (RADR), and Lys-336 each bind substrate. Mn(2+) contacts are provided by Asp-403, His-407, Asp-444, His-445, and His-463.

This sequence belongs to the BPG-independent phosphoglycerate mutase family. As to quaternary structure, monomer. It depends on Mn(2+) as a cofactor.

The enzyme catalyses (2R)-2-phosphoglycerate = (2R)-3-phosphoglycerate. It functions in the pathway carbohydrate degradation; glycolysis; pyruvate from D-glyceraldehyde 3-phosphate: step 3/5. Its function is as follows. Catalyzes the interconversion of 2-phosphoglycerate and 3-phosphoglycerate. The protein is 2,3-bisphosphoglycerate-independent phosphoglycerate mutase of Salmonella paratyphi B (strain ATCC BAA-1250 / SPB7).